The following is a 339-amino-acid chain: tRNA N6-adenosine threonylcarbamoyltransferase (339 aa).

Histidine 112 and histidine 116 together coordinate Fe cation. Substrate contacts are provided by residues 135-139 (LVSGG), aspartate 168, glycine 181, and asparagine 273. Aspartate 301 contributes to the Fe cation binding site.

Belongs to the KAE1 / TsaD family. Requires Fe(2+) as cofactor.

The protein resides in the cytoplasm. The catalysed reaction is L-threonylcarbamoyladenylate + adenosine(37) in tRNA = N(6)-L-threonylcarbamoyladenosine(37) in tRNA + AMP + H(+). Its function is as follows. Required for the formation of a threonylcarbamoyl group on adenosine at position 37 (t(6)A37) in tRNAs that read codons beginning with adenine. Is involved in the transfer of the threonylcarbamoyl moiety of threonylcarbamoyl-AMP (TC-AMP) to the N6 group of A37, together with TsaE and TsaB. TsaD likely plays a direct catalytic role in this reaction. This Coxiella burnetii (strain RSA 493 / Nine Mile phase I) protein is tRNA N6-adenosine threonylcarbamoyltransferase.